Here is a 352-residue protein sequence, read N- to C-terminus: Potassium/proton antiporter CemA (352 aa).

The next 3 helical transmembrane spans lie at 52-72 (VLVS…IHFF), 227-247 (IAAL…IILF), and 312-332 (IILL…KYWI).

It belongs to the CemA family.

Its subcellular location is the plastid. It localises to the chloroplast inner membrane. The catalysed reaction is K(+)(in) + H(+)(out) = K(+)(out) + H(+)(in). In terms of biological role, contributes to K(+)/H(+) antiport activity by supporting proton efflux to control proton extrusion and homeostasis in chloroplasts in a light-dependent manner to modulate photosynthesis. Prevents excessive induction of non-photochemical quenching (NPQ) under continuous-light conditions. Indirectly promotes efficient inorganic carbon uptake into chloroplasts. The sequence is that of Potassium/proton antiporter CemA from Oltmannsiellopsis viridis (Marine flagellate).